We begin with the raw amino-acid sequence, 317 residues long: Probable cell division protein WhiA (317 aa).

The H-T-H motif DNA-binding region spans 278 to 311 (SLQGLGELLDPQVGKSGVNHRLRKIGEKADELRQ).

It belongs to the WhiA family.

Involved in cell division and chromosome segregation. This chain is Probable cell division protein WhiA, found in Lachnospira eligens (strain ATCC 27750 / DSM 3376 / VPI C15-48 / C15-B4) (Eubacterium eligens).